Reading from the N-terminus, the 387-residue chain is Alkanesulfonate monooxygenase (387 aa).

Positions 365–387 (HNSGPFGETVGNDYRPSRLASQS) are disordered.

Belongs to the SsuD family.

It carries out the reaction an alkanesulfonate + FMNH2 + O2 = an aldehyde + FMN + sulfite + H2O + 2 H(+). In terms of biological role, catalyzes the desulfonation of aliphatic sulfonates. This Bradyrhizobium diazoefficiens (strain JCM 10833 / BCRC 13528 / IAM 13628 / NBRC 14792 / USDA 110) protein is Alkanesulfonate monooxygenase.